Consider the following 375-residue polypeptide: DNA replication and repair protein RecF (375 aa).

30 to 37 (GNNAQGKS) contacts ATP.

This sequence belongs to the RecF family.

The protein localises to the cytoplasm. In terms of biological role, the RecF protein is involved in DNA metabolism; it is required for DNA replication and normal SOS inducibility. RecF binds preferentially to single-stranded, linear DNA. It also seems to bind ATP. This chain is DNA replication and repair protein RecF, found in Microcystis aeruginosa (strain NIES-843 / IAM M-2473).